Reading from the N-terminus, the 284-residue chain is RNase adapter protein RapZ (284 aa).

8 to 15 (GRSGSGKS) contributes to the ATP binding site. 56 to 59 (DVRN) is a GTP binding site. Positions 266 to 284 (RSRGKNVQSRHRTLEKRKT) are RNA-binding.

It belongs to the RapZ-like family. RapZ subfamily. Homotrimer.

Modulates the synthesis of GlmS, by affecting the processing and stability of the regulatory small RNA GlmZ. When glucosamine-6-phosphate (GlcN6P) concentrations are high in the cell, RapZ binds GlmZ and targets it to cleavage by RNase E. Consequently, GlmZ is inactivated and unable to activate GlmS synthesis. Under low GlcN6P concentrations, RapZ is sequestered and inactivated by an other regulatory small RNA, GlmY, preventing GlmZ degradation and leading to synthesis of GlmS. This is RNase adapter protein RapZ from Salmonella typhimurium (strain LT2 / SGSC1412 / ATCC 700720).